The primary structure comprises 724 residues: Long-chain-fatty-acid--CoA ligase ACSBG1 (724 aa).

The tract at residues 1-51 (MPRNSGAGYGCPHGDPSMLDSRETPQESRQDMTVGTTQEKLKTSSLTDRQP) is disordered. Basic and acidic residues predominate over residues 20–30 (DSRETPQESRQ). Over residues 31–51 (DMTVGTTQEKLKTSSLTDRQP) the composition is skewed to polar residues. Residues Ser-53 and Ser-56 each carry the phosphoserine modification. ATP contacts are provided by residues 282–290 (TSGTTGNPK), 472–477 (AGYGLS), Asp-550, and Arg-565. Phosphotyrosine is present on Tyr-658. Lys-701 provides a ligand contact to ATP.

The protein belongs to the ATP-dependent AMP-binding enzyme family. Bubblegum subfamily.

It localises to the cytoplasm. The protein localises to the cytoplasmic vesicle. It is found in the microsome. Its subcellular location is the endoplasmic reticulum. The protein resides in the cell membrane. It carries out the reaction a long-chain fatty acid + ATP + CoA = a long-chain fatty acyl-CoA + AMP + diphosphate. It catalyses the reaction (E)-hexadec-2-enoate + ATP + CoA = (2E)-hexadecenoyl-CoA + AMP + diphosphate. The enzyme catalyses hexadecanoate + ATP + CoA = hexadecanoyl-CoA + AMP + diphosphate. Its function is as follows. Catalyzes the conversion of fatty acids such as long-chain and very long-chain fatty acids to their active form acyl-CoAs for both synthesis of cellular lipids, and degradation via beta-oxidation. Can activate diverse saturated, monosaturated and polyunsaturated fatty acids. In Macaca fascicularis (Crab-eating macaque), this protein is Long-chain-fatty-acid--CoA ligase ACSBG1.